Consider the following 440-residue polypeptide: Proline--tRNA ligase (440 aa).

Belongs to the class-II aminoacyl-tRNA synthetase family. ProS type 2 subfamily. Homodimer.

The protein resides in the cytoplasm. It carries out the reaction tRNA(Pro) + L-proline + ATP = L-prolyl-tRNA(Pro) + AMP + diphosphate. Catalyzes the attachment of proline to tRNA(Pro) in a two-step reaction: proline is first activated by ATP to form Pro-AMP and then transferred to the acceptor end of tRNA(Pro). The chain is Proline--tRNA ligase from Azorhizobium caulinodans (strain ATCC 43989 / DSM 5975 / JCM 20966 / LMG 6465 / NBRC 14845 / NCIMB 13405 / ORS 571).